The chain runs to 395 residues: Immunity-related GTPase family M protein 2 (395 aa).

The 177-residue stretch at 63 to 239 folds into the IRG-type G domain; sequence NKIKIAVTGD…PKLRETLQKD (177 aa). GTP contacts are provided by residues 72 to 79, 97 to 101, and 179 to 181; these read DSGNGMSS, TGVVR, and KLD.

It belongs to the TRAFAC class dynamin-like GTPase superfamily. IRG family. Ubiquitinated; polyubiquitinated in the cytosol, promoting Gbp1 recruitment to the T.gondii parasitophorous vacuole membranes.

The protein resides in the cytoplasmic vesicle membrane. It localises to the golgi apparatus membrane. It is found in the cytoplasm. Its subcellular location is the cytosol. It catalyses the reaction GTP + H2O = GDP + phosphate + H(+). In terms of biological role, immunity-related GTPase that plays important roles in innate immunity and inflammatory response. Acts as a dynamin-like protein that binds to intracellular membranes and promotes remodeling and trafficking of those membranes. Required for clearance of acute protozoan and bacterial infections. Acts by participating to Tgtp1/Irgb6 and Gbp1-mediated parasite killing by promoting their accumulation on the T.gondii parasitophorous vacuole membranes. Also required for prolonged loading of ubiquitin and p62/Sqstm1 to parasitophorous vacuole membranes. Also acts as a key negative regulator of the inflammatory response by inhibiting the non-canonical inflammasome, thereby protecting against Casp11-driven septic shock during endotoxemia. This Mus musculus (Mouse) protein is Immunity-related GTPase family M protein 2.